The primary structure comprises 333 residues: MDGIAELTGARVEDLAGMDVFQGCPAEGLVSLAASVQPLRAAAGQVLLRQGEPAVSFLLISSGSAEVSHVGDDGVAIIARALPGMIVGEIALLRDSPRSATVTTIEPLTGWTGGRGAFATMVHIPGVGERLLRTARQRLAAFVSPIPVRLADGTQLMLRPVLPGDRERTVHGHIQFSGETLYRRFMSARVPSPALMHYLSEVDYVDHFVWVVTDGSDPVADARFVRDETDPTVAEIAFTVADAYQGRGIGSFLIGALSVAARVDGVERFAARMLSDNVPMRTIMDRYGAVWQREDVGVITTMIDVPGPGELSLGREMVDQINRVARQVIEAVG.

Residues Gly88–Ala91, Arg98–Ser99, and Arg138 contribute to the 3',5'-cyclic AMP site. One can recognise an N-acetyltransferase domain in the interval Leu156–Val318. A substrate-binding site is contributed by His173. Asp214 provides a ligand contact to Mg(2+). Substrate contacts are provided by residues Phe238–Val240, Gly246–Ser251, Asn277, and Arg286.

As to quaternary structure, homodimer. It depends on Mg(2+) as a cofactor.

Autoinhibited and allosterically activated by 3,5-cyclic adenosine monophosphate (cAMP). An extensive conformational rearrangement relieves this autoinhibition by means of a substrate-mimicking lid that covers the protein-substrate binding surface. Functionally, catalyzes specifically the acetylation of the epsilon-amino group of a highly conserved lysine residue in acetyl-CoA synthetase (ACS). This acetylation results in the inactivation of ACS activity and could be important for mycobacteria to adjust to environmental changes. The polypeptide is Acetyltransferase Pat (Mycobacterium tuberculosis (strain ATCC 25618 / H37Rv)).